The sequence spans 314 residues: Galectin-12 (314 aa).

Galectin domains lie at 27–161 (YGTT…VGFL) and 190–314 (CSRA…CVHC).

Its subcellular location is the nucleus. Its function is as follows. Binds lactose. May participate in the apoptosis of adipocytes. This chain is Galectin-12 (Lgals12), found in Mus musculus (Mouse).